The following is a 124-amino-acid chain: Hydrogenase maturation factor HypA (124 aa).

His2 contributes to the Ni(2+) binding site. The Zn(2+) site is built by Cys78, Cys81, Cys97, and Cys100.

It belongs to the HypA/HybF family.

Its function is as follows. Involved in the maturation of [NiFe] hydrogenases. Required for nickel insertion into the metal center of the hydrogenase. This Methanococcus vannielii (strain ATCC 35089 / DSM 1224 / JCM 13029 / OCM 148 / SB) protein is Hydrogenase maturation factor HypA.